Reading from the N-terminus, the 179-residue chain is Inosine/xanthosine triphosphatase (179 aa).

Residues 8–13 (TTNPAK) and 68–69 (EA) contribute to the substrate site. E68 provides a ligand contact to Mg(2+).

Belongs to the YjjX NTPase family. In terms of assembly, homodimer. Mg(2+) serves as cofactor. The cofactor is Mn(2+).

It catalyses the reaction XTP + H2O = XDP + phosphate + H(+). The catalysed reaction is ITP + H2O = IDP + phosphate + H(+). In terms of biological role, phosphatase that hydrolyzes non-canonical purine nucleotides such as XTP and ITP to their respective diphosphate derivatives. Probably excludes non-canonical purines from DNA/RNA precursor pool, thus preventing their incorporation into DNA/RNA and avoiding chromosomal lesions. This chain is Inosine/xanthosine triphosphatase, found in Serratia proteamaculans (strain 568).